We begin with the raw amino-acid sequence, 552 residues long: MKGCLATMDKELWIKRANDSLVKHFYEQQSDIEQREGFESKLTFGTAGIRGKFGLGEGRLNKFTIEKLALGLARYLNAQTNNPTIVIHYDIRHLSTEFAQIIANVLANHQIIVYLPDTYKTTPELSFAVRNLNTTAGIMITASHNPKDYNGIKVYSSDGAQLSTDASELVSRYIEEVGDPLQIDIPISKQNTSYIKPFPKSVTDDYMKHIQNMIGYIPKSDLQVVFTSLHGTSVPIVPELLKSLNFNQFNLVEAQCKPDPNFSSVQSANPEDHRAFDQAVELANKSHADLLISTDPDADRLGIAERDAHGHITYFNGNQIGALLLNYRIQQTSQLRHRLMIQSIVSSELTKSLARYNNVEYKEVLTGFKFIAQEIRQLDDHQNMIFAFEESYGFLSEPFVRDKDAVQIVPLIIKYASELKLYGKTLKDELEQIYQTVGRHEDTLFSHTLEGLEGKKKIESIMTHFRSNPPQEIQGLKVKAIEDYLTSEVYQLDKDTTSQIDSPKSNVIRVLFDEGFIALRPSGTEPKIKLYVSLKCPDFDDVAQKINAMIFS.

Residue S143 is the Phosphoserine intermediate of the active site. S143, D295, D297, and D299 together coordinate Mg(2+).

This sequence belongs to the phosphohexose mutase family. The cofactor is Mg(2+).

It carries out the reaction alpha-D-glucose 1-phosphate = alpha-D-glucose 6-phosphate. It participates in glycolipid metabolism; diglucosyl-diacylglycerol biosynthesis. Catalyzes the interconversion between glucose-6-phosphate and alpha-glucose-1-phosphate. This is the first step in the biosynthesis of diglucosyl-diacylglycerol (Glc2-DAG), i.e. the predominant glycolipid found in the S.aureus membrane, which is also used as a membrane anchor for lipoteichoic acid (LTA). This chain is Phosphoglucomutase (pgcA), found in Staphylococcus aureus (strain MRSA252).